Here is a 421-residue protein sequence, read N- to C-terminus: Serine--tRNA ligase (421 aa).

Position 231–233 (231–233 (TGE)) interacts with L-serine. Residue 262-264 (RRE) participates in ATP binding. Position 285 (Glu285) interacts with L-serine. Residue 349-352 (EVSS) participates in ATP binding. Residue Ser384 participates in L-serine binding.

It belongs to the class-II aminoacyl-tRNA synthetase family. Type-1 seryl-tRNA synthetase subfamily. As to quaternary structure, homodimer. The tRNA molecule binds across the dimer.

Its subcellular location is the cytoplasm. It carries out the reaction tRNA(Ser) + L-serine + ATP = L-seryl-tRNA(Ser) + AMP + diphosphate + H(+). The catalysed reaction is tRNA(Sec) + L-serine + ATP = L-seryl-tRNA(Sec) + AMP + diphosphate + H(+). It functions in the pathway aminoacyl-tRNA biosynthesis; selenocysteinyl-tRNA(Sec) biosynthesis; L-seryl-tRNA(Sec) from L-serine and tRNA(Sec): step 1/1. In terms of biological role, catalyzes the attachment of serine to tRNA(Ser). Is also able to aminoacylate tRNA(Sec) with serine, to form the misacylated tRNA L-seryl-tRNA(Sec), which will be further converted into selenocysteinyl-tRNA(Sec). This is Serine--tRNA ligase from Methylacidiphilum infernorum (isolate V4) (Methylokorus infernorum (strain V4)).